The following is a 585-amino-acid chain: Involucrin (585 aa).

Residues 1-15 (MSQQHTLPVTLSPAL) are compositionally biased toward polar residues. The interval 1-132 (MSQQHTLPVT…LEEEKKLLDQ (132 aa)) is disordered. Gln79 carries the Omega-hydroxyceramide glutamate ester lipid modification. A compositionally biased stretch (basic and acidic residues) spans 92 to 115 (WEQHEEYQKAENPEQQLKQEKTQR). Omega-hydroxyceramide glutamate ester attachment occurs at residues Gln118 and Gln133. Positions 149-540 (KEQLLELPEQ…KDLEQQKGQL (392 aa)) are disordered. 23 tandem repeats follow at residues 153 to 162 (LELPEQQEGH), 163 to 172 (LKHLEQQEGQ), 173 to 182 (LKHPEQQEGQ), 183 to 192 (LELPEQQEGQ), 193 to 202 (LELPEQQEGQ), 203 to 212 (LELPEQQEGQ), 213 to 222 (LELPEQQEGQ), 223 to 232 (LELPEQQEGQ), 233 to 242 (LELPQQQEGQ), 243 to 252 (LELSEQQEGQ), 253 to 262 (LELSEQQEGQ), 263 to 272 (LKHLEHQEGQ), 273 to 282 (LEVPEEQMGQ), 283 to 292 (LKYLEQQEGQ), 293 to 302 (LKHLDQQEKQ), 303 to 312 (PELPEQQMGQ), 313 to 322 (LKHLEQQEGQ), 323 to 332 (PKHLEQQEGQ), 333 to 342 (LEQLEEQEGQ), 343 to 352 (LKHLEQQEGQ), 353 to 362 (LEHLEHQEGQ), 363 to 372 (LGLPEQQVLQ), and 373 to 382 (LKQLEKQQGQ). The 39 X 10 AA approximate tandem repeats of [LP]-[EKG]-[LHVYQEK]-[PLSQE]-[EQDV]-[QHEKRGA]-Q-[EMVQLP]-[GKLE]-[QHVNLD] stretch occupies residues 153–542 (LELPEQQEGH…LEQQKGQLEQ (390 aa)). Positions 159–178 (QEGHLKHLEQQEGQLKHPEQ) are enriched in basic and acidic residues. Residues 179-261 (QEGQLELPEQ…QLELSEQQEG (83 aa)) show a composition bias toward low complexity. Basic and acidic residues predominate over residues 262–271 (QLKHLEHQEG). 3 stretches are compositionally biased toward basic and acidic residues: residues 292-304 (QLKH…KQPE), 314-328 (KHLE…HLEQ), and 341-360 (GQLK…EHQE). Residues 361–383 (GQLGLPEQQVLQLKQLEKQQGQP) show a composition bias toward low complexity. Residues 383-392 (PKHLEEEEGQ) form a 24; approximate repeat. Basic and acidic residues predominate over residues 384–393 (KHLEEEEGQL). 11 tandem repeats follow at residues 393-402 (LKHLVQQEGQ), 403-412 (LKHLVQQEGQ), 413-422 (LEQQERQVEH), 423-432 (LEQQVGQLKH), 433-442 (LEEQEGQLKH), 443-452 (LEQQQGQLEV), 453-462 (PEQQVGQPKN), 463-472 (LEQEEKQLEL), 473-482 (PEQQEGQVKH), 483-492 (LEKQEAQLEL), and 493-502 (PEQQVGQPKH). 2 stretches are compositionally biased toward basic and acidic residues: residues 415-424 (QQERQVEHLE) and 431-444 (KHLE…KHLE). Residues 445 to 462 (QQQGQLEVPEQQVGQPKN) show a composition bias toward low complexity. Positions 479–488 (QVKHLEKQEA) are enriched in basic and acidic residues. Residue Gln496 forms an Isoglutamyl lysine isopeptide (Gln-Lys) (interchain with K-? in other proteins) linkage. Residues 501 to 535 (KHLEQQEKHLEHPEQQDGQLKHLEQQEGQLKDLEQ) show a composition bias toward basic and acidic residues. The stretch at 503-512 (LEQQEKHLEH) is one 36; approximate repeat. Tandem repeats lie at residues 513 to 522 (PEQQDGQLKH) and 523 to 532 (LEQQEGQLKD). One copy of the 39; approximate repeat lies at 533-542 (LEQQKGQLEQ).

It belongs to the involucrin family. As to quaternary structure, directly or indirectly cross-linked to cornifelin (CNFN). In terms of processing, substrate of transglutaminase. Some glutamines and lysines are cross-linked to other involucrin molecules, to other proteins such as keratin, desmoplakin, periplakin and envoplakin, and to lipids like omega-hydroxyceramide. Keratinocytes of epidermis and other stratified squamous epithelia.

The protein resides in the cytoplasm. Part of the insoluble cornified cell envelope (CE) of stratified squamous epithelia. In Homo sapiens (Human), this protein is Involucrin (IVL).